A 353-amino-acid polypeptide reads, in one-letter code: Phosphoribosylformylglycinamidine cyclo-ligase (353 aa).

The protein belongs to the AIR synthase family.

It is found in the cytoplasm. It carries out the reaction 2-formamido-N(1)-(5-O-phospho-beta-D-ribosyl)acetamidine + ATP = 5-amino-1-(5-phospho-beta-D-ribosyl)imidazole + ADP + phosphate + H(+). The protein operates within purine metabolism; IMP biosynthesis via de novo pathway; 5-amino-1-(5-phospho-D-ribosyl)imidazole from N(2)-formyl-N(1)-(5-phospho-D-ribosyl)glycinamide: step 2/2. The polypeptide is Phosphoribosylformylglycinamidine cyclo-ligase (Pseudomonas aeruginosa (strain ATCC 15692 / DSM 22644 / CIP 104116 / JCM 14847 / LMG 12228 / 1C / PRS 101 / PAO1)).